The chain runs to 47 residues: Zinc-finger protein TK0143 (47 aa).

Residues 18–41 (FRCPRCGMVFRSAKAYTRHVNKAH) form a C2H2-type zinc finger. Positions 20, 23, 36, and 41 each coordinate Zn(2+).

In terms of assembly, crystallized in association with 70S ribosomes. Zn(2+) is required as a cofactor.

This is Zinc-finger protein TK0143 from Thermococcus kodakarensis (strain ATCC BAA-918 / JCM 12380 / KOD1) (Pyrococcus kodakaraensis (strain KOD1)).